The primary structure comprises 230 residues: UPF0173 metal-dependent hydrolase RSKD131_0588 (230 aa).

This sequence belongs to the UPF0173 family.

The protein is UPF0173 metal-dependent hydrolase RSKD131_0588 of Cereibacter sphaeroides (strain KD131 / KCTC 12085) (Rhodobacter sphaeroides).